Reading from the N-terminus, the 130-residue chain is Modulator protein MzrA (130 aa).

The Cytoplasmic portion of the chain corresponds to 1–15 (MIAAFIKRHAPQRRL). The chain crosses the membrane as a helical span at residues 16–36 (SLWLALPVVALLALVMMPALF). The Periplasmic segment spans residues 37-130 (RHDSALQIRA…RISFKPQSIG (94 aa)).

It belongs to the MzrA family. As to quaternary structure, interacts with EnvZ.

It localises to the cell inner membrane. Functionally, modulates the activity of the EnvZ/OmpR two-component regulatory system, probably by directly modulating EnvZ enzymatic activity and increasing stability of phosphorylated OmpR. The polypeptide is Modulator protein MzrA (Erwinia tasmaniensis (strain DSM 17950 / CFBP 7177 / CIP 109463 / NCPPB 4357 / Et1/99)).